Here is a 366-residue protein sequence, read N- to C-terminus: Protein-methionine-sulfoxide reductase catalytic subunit MsrP (366 aa).

Residues 1–22 (MHNTFTHTKNNTHTKNNTQAKN) show a composition bias toward low complexity. The disordered stretch occupies residues 1 to 40 (MHNTFTHTKNNTHTKNNTQAKNSGSQTKSNAVSLNKPRKL). The tat-type signal signal peptide spans 1 to 76 (MHNTFTHTKN…TLALPASAQA (76 aa)). Over residues 23–33 (SGSQTKSNAVS) the composition is skewed to polar residues. Mo-molybdopterin-binding positions include N120, 123-124 (YE), C178, T213, N265, R270, and 281-283 (SIK).

The protein belongs to the MsrP family. Heterodimer of a catalytic subunit (MsrP) and a heme-binding subunit (MsrQ). It depends on Mo-molybdopterin as a cofactor. Predicted to be exported by the Tat system. The position of the signal peptide cleavage has not been experimentally proven.

Its subcellular location is the periplasm. It carries out the reaction L-methionyl-[protein] + a quinone + H2O = L-methionyl-(S)-S-oxide-[protein] + a quinol. The catalysed reaction is L-methionyl-[protein] + a quinone + H2O = L-methionyl-(R)-S-oxide-[protein] + a quinol. Its function is as follows. Part of the MsrPQ system that repairs oxidized periplasmic proteins containing methionine sulfoxide residues (Met-O), using respiratory chain electrons. Thus protects these proteins from oxidative-stress damage caused by reactive species of oxygen and chlorine generated by the host defense mechanisms. MsrPQ is essential for the maintenance of envelope integrity under bleach stress, rescuing a wide series of structurally unrelated periplasmic proteins from methionine oxidation. The catalytic subunit MsrP is non-stereospecific, being able to reduce both (R-) and (S-) diastereoisomers of methionine sulfoxide. This chain is Protein-methionine-sulfoxide reductase catalytic subunit MsrP, found in Yersinia pestis.